A 340-amino-acid polypeptide reads, in one-letter code: Glycerol-3-phosphate dehydrogenase [NAD(P)+] (340 aa).

Serine 14, phenylalanine 15, arginine 35, and lysine 108 together coordinate NADPH. Lysine 108 and glycine 136 together coordinate sn-glycerol 3-phosphate. Alanine 140 lines the NADPH pocket. The sn-glycerol 3-phosphate site is built by lysine 191, aspartate 244, serine 254, arginine 255, and asparagine 256. Lysine 191 acts as the Proton acceptor in catalysis. Arginine 255 provides a ligand contact to NADPH. Glutamate 281 serves as a coordination point for NADPH.

The protein belongs to the NAD-dependent glycerol-3-phosphate dehydrogenase family.

It localises to the cytoplasm. The enzyme catalyses sn-glycerol 3-phosphate + NAD(+) = dihydroxyacetone phosphate + NADH + H(+). It carries out the reaction sn-glycerol 3-phosphate + NADP(+) = dihydroxyacetone phosphate + NADPH + H(+). The protein operates within membrane lipid metabolism; glycerophospholipid metabolism. In terms of biological role, catalyzes the reduction of the glycolytic intermediate dihydroxyacetone phosphate (DHAP) to sn-glycerol 3-phosphate (G3P), the key precursor for phospholipid synthesis. In Pseudomonas aeruginosa (strain LESB58), this protein is Glycerol-3-phosphate dehydrogenase [NAD(P)+].